The chain runs to 47 residues: Large ribosomal subunit protein bL34 (47 aa).

The protein belongs to the bacterial ribosomal protein bL34 family.

This is Large ribosomal subunit protein bL34 from Mycobacterium ulcerans (strain Agy99).